The chain runs to 455 residues: Bifunctional protein GlmU (455 aa).

Positions 1-226 are pyrophosphorylase; it reads MSLDIVILAA…AMEVQGANDR (226 aa). Residues 8–11, K22, Q73, 78–79, 99–101, G136, E151, N166, and N224 each bind UDP-N-acetyl-alpha-D-glucosamine; these read LAAG, GT, and YGD. Residue D101 coordinates Mg(2+). N224 lines the Mg(2+) pocket. The tract at residues 227–247 is linker; that stretch reads KQLSELERHYQLREARRLMAA. The segment at 248–455 is N-acetyltransferase; the sequence is GVTLRDPSRF…WKRPVKITKD (208 aa). 2 residues coordinate UDP-N-acetyl-alpha-D-glucosamine: R330 and K348. H360 (proton acceptor) is an active-site residue. Positions 363 and 374 each coordinate UDP-N-acetyl-alpha-D-glucosamine. Acetyl-CoA-binding positions include A377, 383–384, S402, A420, and R437; that span reads NY.

This sequence in the N-terminal section; belongs to the N-acetylglucosamine-1-phosphate uridyltransferase family. The protein in the C-terminal section; belongs to the transferase hexapeptide repeat family. Homotrimer. Requires Mg(2+) as cofactor.

The protein localises to the cytoplasm. The catalysed reaction is alpha-D-glucosamine 1-phosphate + acetyl-CoA = N-acetyl-alpha-D-glucosamine 1-phosphate + CoA + H(+). The enzyme catalyses N-acetyl-alpha-D-glucosamine 1-phosphate + UTP + H(+) = UDP-N-acetyl-alpha-D-glucosamine + diphosphate. It participates in nucleotide-sugar biosynthesis; UDP-N-acetyl-alpha-D-glucosamine biosynthesis; N-acetyl-alpha-D-glucosamine 1-phosphate from alpha-D-glucosamine 6-phosphate (route II): step 2/2. The protein operates within nucleotide-sugar biosynthesis; UDP-N-acetyl-alpha-D-glucosamine biosynthesis; UDP-N-acetyl-alpha-D-glucosamine from N-acetyl-alpha-D-glucosamine 1-phosphate: step 1/1. It functions in the pathway bacterial outer membrane biogenesis; LPS lipid A biosynthesis. Catalyzes the last two sequential reactions in the de novo biosynthetic pathway for UDP-N-acetylglucosamine (UDP-GlcNAc). The C-terminal domain catalyzes the transfer of acetyl group from acetyl coenzyme A to glucosamine-1-phosphate (GlcN-1-P) to produce N-acetylglucosamine-1-phosphate (GlcNAc-1-P), which is converted into UDP-GlcNAc by the transfer of uridine 5-monophosphate (from uridine 5-triphosphate), a reaction catalyzed by the N-terminal domain. The sequence is that of Bifunctional protein GlmU from Pseudomonas syringae pv. tomato (strain ATCC BAA-871 / DC3000).